A 260-amino-acid chain; its full sequence is Acyl-[acyl-carrier-protein]--UDP-N-acetylglucosamine O-acyltransferase (260 aa).

Belongs to the transferase hexapeptide repeat family. LpxA subfamily. Homotrimer.

The protein localises to the cytoplasm. It carries out the reaction a (3R)-hydroxyacyl-[ACP] + UDP-N-acetyl-alpha-D-glucosamine = a UDP-3-O-[(3R)-3-hydroxyacyl]-N-acetyl-alpha-D-glucosamine + holo-[ACP]. The protein operates within glycolipid biosynthesis; lipid IV(A) biosynthesis; lipid IV(A) from (3R)-3-hydroxytetradecanoyl-[acyl-carrier-protein] and UDP-N-acetyl-alpha-D-glucosamine: step 1/6. Functionally, involved in the biosynthesis of lipid A, a phosphorylated glycolipid that anchors the lipopolysaccharide to the outer membrane of the cell. The protein is Acyl-[acyl-carrier-protein]--UDP-N-acetylglucosamine O-acyltransferase of Aliarcobacter butzleri (strain RM4018) (Arcobacter butzleri).